We begin with the raw amino-acid sequence, 178 residues long: Large ribosomal subunit protein eL20y (178 aa).

It belongs to the eukaryotic ribosomal protein eL20 family.

In Arabidopsis thaliana (Mouse-ear cress), this protein is Large ribosomal subunit protein eL20y (RPL18AB).